Reading from the N-terminus, the 895-residue chain is Tiger protein D1 (895 aa).

The signal sequence occupies residues 1-21; sequence MIHKMYFFLILLFSLFIIVYS. The Extracellular portion of the chain corresponds to 22–861; sequence APNRVTRNET…ERKSSKLSGG (840 aa). Residues N29, N52, N171, N181, N253, N257, N277, N288, N351, N368, N407, N428, N451, N481, N507, N521, N573, N583, N593, N623, N652, N685, N720, N757, N766, N780, and N799 are each glycosylated (N-linked (GlcNAc...) asparagine). Positions 295 to 381 constitute an IPT/TIG 1 domain; that stretch reads AVISSISSVS…SGSDAVTFTY (87 aa). 2 IPT/TIG domains span residues 560 to 638 and 642 to 725; these read PKVE…SFYL and PVIY…TLTY. The chain crosses the membrane as a helical span at residues 862–882; sequence AIAGITIGCVAGAGALVGSVF. At 883-895 the chain is on the cytoplasmic side; the sequence is YFKLITRVKKAFN.

Its subcellular location is the cell membrane. Functionally, may be involved in the regulation of aggregation. Activates tgrC1. This Dictyostelium discoideum (Social amoeba) protein is Tiger protein D1 (tgrD1).